A 199-amino-acid chain; its full sequence is Cytochrome c oxidase subunit 2 (199 aa).

A helical membrane pass occupies residues 1–13 (AICSLVLYLLTLM). Residues 14–26 (LMEKLSSNSVDAQ) lie on the Mitochondrial matrix side of the membrane. Residues 27–54 (EVELVWTILPAIVLILLALPSLQILYMM) form a helical membrane-spanning segment. Residues 55-199 (DEIDEPDLTL…SSLLSTSSSL (145 aa)) lie on the Mitochondrial intermembrane side of the membrane. 6 residues coordinate Cu cation: H128, C163, E165, C167, H171, and M174. Position 165 (E165) interacts with Mg(2+).

It belongs to the cytochrome c oxidase subunit 2 family. Component of the cytochrome c oxidase (complex IV, CIV), a multisubunit enzyme composed of 14 subunits. The complex is composed of a catalytic core of 3 subunits MT-CO1, MT-CO2 and MT-CO3, encoded in the mitochondrial DNA, and 11 supernumerary subunits COX4I, COX5A, COX5B, COX6A, COX6B, COX6C, COX7A, COX7B, COX7C, COX8 and NDUFA4, which are encoded in the nuclear genome. The complex exists as a monomer or a dimer and forms supercomplexes (SCs) in the inner mitochondrial membrane with NADH-ubiquinone oxidoreductase (complex I, CI) and ubiquinol-cytochrome c oxidoreductase (cytochrome b-c1 complex, complex III, CIII), resulting in different assemblies (supercomplex SCI(1)III(2)IV(1) and megacomplex MCI(2)III(2)IV(2)). Found in a complex with TMEM177, COA6, COX18, COX20, SCO1 and SCO2. Interacts with TMEM177 in a COX20-dependent manner. Interacts with COX20. Interacts with COX16. Requires Cu cation as cofactor.

It is found in the mitochondrion inner membrane. It catalyses the reaction 4 Fe(II)-[cytochrome c] + O2 + 8 H(+)(in) = 4 Fe(III)-[cytochrome c] + 2 H2O + 4 H(+)(out). Its function is as follows. Component of the cytochrome c oxidase, the last enzyme in the mitochondrial electron transport chain which drives oxidative phosphorylation. The respiratory chain contains 3 multisubunit complexes succinate dehydrogenase (complex II, CII), ubiquinol-cytochrome c oxidoreductase (cytochrome b-c1 complex, complex III, CIII) and cytochrome c oxidase (complex IV, CIV), that cooperate to transfer electrons derived from NADH and succinate to molecular oxygen, creating an electrochemical gradient over the inner membrane that drives transmembrane transport and the ATP synthase. Cytochrome c oxidase is the component of the respiratory chain that catalyzes the reduction of oxygen to water. Electrons originating from reduced cytochrome c in the intermembrane space (IMS) are transferred via the dinuclear copper A center (CU(A)) of subunit 2 and heme A of subunit 1 to the active site in subunit 1, a binuclear center (BNC) formed by heme A3 and copper B (CU(B)). The BNC reduces molecular oxygen to 2 water molecules using 4 electrons from cytochrome c in the IMS and 4 protons from the mitochondrial matrix. In Apteryx australis (Southern brown kiwi), this protein is Cytochrome c oxidase subunit 2 (MT-CO2).